Reading from the N-terminus, the 169-residue chain is uncharacterized protein (169 aa).

The HTH asnC-type domain occupies 18–79 (LDRADVALLN…IVSPKAVGRP (62 aa)). The segment at residues 37–56 (SEELADKVGLSPTACQRRLK) is a DNA-binding region (H-T-H motif).

This is an uncharacterized protein from Sinorhizobium fredii (strain NBRC 101917 / NGR234).